A 505-amino-acid polypeptide reads, in one-letter code: Deoxyguanosinetriphosphate triphosphohydrolase (505 aa).

The region spanning 66–273 is the HD domain; the sequence is RLTHSMEVQQ…MEAADDISYC (208 aa).

This sequence belongs to the dGTPase family. Type 1 subfamily. Homotetramer. Requires Mg(2+) as cofactor.

The enzyme catalyses dGTP + H2O = 2'-deoxyguanosine + triphosphate + H(+). DGTPase preferentially hydrolyzes dGTP over the other canonical NTPs. This chain is Deoxyguanosinetriphosphate triphosphohydrolase, found in Salmonella schwarzengrund (strain CVM19633).